The primary structure comprises 210 residues: Thiamine-phosphate synthase (210 aa).

4-amino-2-methyl-5-(diphosphooxymethyl)pyrimidine is bound by residues 38–42 (QLREK) and asparagine 70. Residues aspartate 71 and aspartate 90 each coordinate Mg(2+). Residue serine 109 participates in 4-amino-2-methyl-5-(diphosphooxymethyl)pyrimidine binding. Residue 139-141 (TPT) coordinates 2-[(2R,5Z)-2-carboxy-4-methylthiazol-5(2H)-ylidene]ethyl phosphate. Lysine 142 is a binding site for 4-amino-2-methyl-5-(diphosphooxymethyl)pyrimidine. 2-[(2R,5Z)-2-carboxy-4-methylthiazol-5(2H)-ylidene]ethyl phosphate is bound by residues glycine 170 and 190-191 (VS).

It belongs to the thiamine-phosphate synthase family. Requires Mg(2+) as cofactor.

It carries out the reaction 2-[(2R,5Z)-2-carboxy-4-methylthiazol-5(2H)-ylidene]ethyl phosphate + 4-amino-2-methyl-5-(diphosphooxymethyl)pyrimidine + 2 H(+) = thiamine phosphate + CO2 + diphosphate. The enzyme catalyses 2-(2-carboxy-4-methylthiazol-5-yl)ethyl phosphate + 4-amino-2-methyl-5-(diphosphooxymethyl)pyrimidine + 2 H(+) = thiamine phosphate + CO2 + diphosphate. The catalysed reaction is 4-methyl-5-(2-phosphooxyethyl)-thiazole + 4-amino-2-methyl-5-(diphosphooxymethyl)pyrimidine + H(+) = thiamine phosphate + diphosphate. It functions in the pathway cofactor biosynthesis; thiamine diphosphate biosynthesis; thiamine phosphate from 4-amino-2-methyl-5-diphosphomethylpyrimidine and 4-methyl-5-(2-phosphoethyl)-thiazole: step 1/1. Functionally, condenses 4-methyl-5-(beta-hydroxyethyl)thiazole monophosphate (THZ-P) and 2-methyl-4-amino-5-hydroxymethyl pyrimidine pyrophosphate (HMP-PP) to form thiamine monophosphate (TMP). The protein is Thiamine-phosphate synthase of Leptospira biflexa serovar Patoc (strain Patoc 1 / Ames).